Here is a 38-residue protein sequence, read N- to C-terminus: Photosystem II reaction center protein L (38 aa).

A helical membrane pass occupies residues S17–F37.

It belongs to the PsbL family. In terms of assembly, PSII is composed of 1 copy each of membrane proteins PsbA, PsbB, PsbC, PsbD, PsbE, PsbF, PsbH, PsbI, PsbJ, PsbK, PsbL, PsbM, PsbT, PsbY, PsbZ, Psb30/Ycf12, at least 3 peripheral proteins of the oxygen-evolving complex and a large number of cofactors. It forms dimeric complexes.

It localises to the plastid. The protein resides in the chloroplast thylakoid membrane. Functionally, one of the components of the core complex of photosystem II (PSII). PSII is a light-driven water:plastoquinone oxidoreductase that uses light energy to abstract electrons from H(2)O, generating O(2) and a proton gradient subsequently used for ATP formation. It consists of a core antenna complex that captures photons, and an electron transfer chain that converts photonic excitation into a charge separation. This subunit is found at the monomer-monomer interface and is required for correct PSII assembly and/or dimerization. The chain is Photosystem II reaction center protein L from Bigelowiella natans (Pedinomonas minutissima).